Reading from the N-terminus, the 88-residue chain is Large ribosomal subunit protein bL27 (88 aa).

Positions 1–13 are enriched in polar residues; it reads MATKKGASSSSNG. The segment at 1 to 23 is disordered; the sequence is MATKKGASSSSNGRDSEAKRLGV.

This sequence belongs to the bacterial ribosomal protein bL27 family.

The chain is Large ribosomal subunit protein bL27 from Corynebacterium urealyticum (strain ATCC 43042 / DSM 7109).